Reading from the N-terminus, the 197-residue chain is Probable nicotinate-nucleotide adenylyltransferase (197 aa).

The protein belongs to the NadD family.

It catalyses the reaction nicotinate beta-D-ribonucleotide + ATP + H(+) = deamido-NAD(+) + diphosphate. The protein operates within cofactor biosynthesis; NAD(+) biosynthesis; deamido-NAD(+) from nicotinate D-ribonucleotide: step 1/1. Functionally, catalyzes the reversible adenylation of nicotinate mononucleotide (NaMN) to nicotinic acid adenine dinucleotide (NaAD). In Bordetella pertussis (strain Tohama I / ATCC BAA-589 / NCTC 13251), this protein is Probable nicotinate-nucleotide adenylyltransferase.